Reading from the N-terminus, the 374-residue chain is Double homeobox protein 4C (374 aa).

The span at Met-1–Thr-10 shows a compositional bias: polar residues. Disordered regions lie at residues Met-1–Leu-24, Ser-72–Thr-102, and Leu-218–Leu-374. DNA-binding regions (homeobox) lie at residues Gly-19 to His-78 and Gly-94 to Gly-153. Over residues Lys-265–Arg-274 the composition is skewed to basic and acidic residues. Composition is skewed to low complexity over residues Pro-278 to Pro-302 and Ala-319 to Ala-329. The segment covering Gln-354–Leu-374 has biased composition (polar residues).

May interact with MYF5; regulates MYF5 expression. As to expression, expressed in muscles, as well as in primary myoblasts and myotubes (at protein level).

It is found in the nucleus. The protein localises to the cytoplasm. Functionally, down-regulates MYOD1 expression and may up-regulate MYF5 expression. May regulate microRNA (miRNA) transcription, up-regulating the expression of some myogenic miRNAs, including MIR1-1, MIR133A2, MIR133B and MIR206. Impairs the differentiation of myoblasts and may be involved in muscle regeneration. Reduces DUX4-induced nuclear localization of CTNNB1/beta-catenin and its subsequent activation of target genes. The polypeptide is Double homeobox protein 4C (DUX4L9) (Homo sapiens (Human)).